Consider the following 479-residue polypeptide: Calcium-dependent mitochondrial ATP-magnesium/phosphate carrier protein 3 (479 aa).

Residues 1–208 (MESSKPKNRN…ISKHVKRSRL (208 aa)) lie on the Mitochondrial intermembrane side of the membrane. EF-hand domains lie at 33 to 68 (EREI…LQIP), 69 to 104 (PEYK…KELE), 105 to 135 (LYRI…AGIE), and 136 to 171 (IDDE…YPHE). 5 residues coordinate Ca(2+): Asp-82, Asn-84, Asp-86, Arg-88, and Glu-93. Residues Asp-149, Asp-151, Asn-153, Thr-155, and Glu-160 each contribute to the Ca(2+) site. Solcar repeat units lie at residues 203–286 (VKRS…LKPM), 294–381 (IGTS…LKDL), and 392–475 (PGPL…MKKN). A helical transmembrane segment spans residues 209-226 (LLAGGLAGAVSRTATAPL). At 227 to 260 (DRLKVVLQVQRAHAGVLPTIKKIWREDKLMGFFR) the chain is on the mitochondrial matrix side. Residues 261 to 280 (GNGLNVMKVAPESAIKFCAY) form a helical membrane-spanning segment. The Mitochondrial intermembrane segment spans residues 281 to 303 (EMLKPMIGGEDGDIGTSGRLMAG). Residues 304 to 317 (GMAGALAQTAIYPM) form a helical membrane-spanning segment. Over 318–355 (DLVKTRLQTCVSEGGKAPKLWKLTKDIWVREGPRAFYK) the chain is Mitochondrial matrix. A helical transmembrane segment spans residues 356–375 (GLFPSLLGIVPYAGIDLAAY). Over 376 to 397 (ETLKDLSRTYILQDTEPGPLIQ) the chain is Mitochondrial intermembrane. The helical transmembrane segment at 398-415 (LSCGMTSGALGASCVYPL) threads the bilayer. The Mitochondrial matrix segment spans residues 416–449 (QVVRTRMQADSSKTTMKQEFMNTMKGEGLRGFYR). A helical membrane pass occupies residues 450–469 (GLLPNLLKVVPAASITYIVY). Topologically, residues 470–479 (EAMKKNMALD) are mitochondrial intermembrane.

This sequence belongs to the mitochondrial carrier (TC 2.A.29) family. Expressed in flowers, leaves, stems, roots and seedlings, mostly in seedlings.

The protein resides in the mitochondrion inner membrane. Counter-exchange transport activity is saturable and inhibited by pyridoxal-5'-phosphate, EDTA and EGTA. Activated by calcium Ca(2+) and manganese Mn(2+) ions, and slightly by iron Fe(2+) and zinc Zn(2+) ions. Repressed by copper ions Cu(2+) and slightly by magnesium Mg(2+) ions. Magnesium Mg(2+) ions promotes slightly ATP uptake, ATP-Mg(2+) being exchanged with ATP(4-). Its function is as follows. Calcium-dependent mitochondrial carrier protein that catalyzes the import of ATP co-transported with metal divalent cations across the mitochondrial inner membrane in exchange for phosphate (Pi). Can transport phosphate, AMP, ADP, ATP, adenosine 5'-phosphosulfate, sulfate and thiosulfate, and, to a lesser extent, other nucleotides. Binds calcium ions Ca(2+). Also mediates calcium uptake. The sequence is that of Calcium-dependent mitochondrial ATP-magnesium/phosphate carrier protein 3 from Arabidopsis thaliana (Mouse-ear cress).